We begin with the raw amino-acid sequence, 641 residues long: Methionine--tRNA ligase (641 aa).

The 'HIGH' region motif lies at Tyr-13–Asn-23. The Zn(2+) site is built by Cys-128, Cys-131, Cys-145, and Cys-148. The 'KMSKS' region motif lies at Lys-298 to Ser-302. Residue Lys-301 participates in ATP binding. In terms of domain architecture, tRNA-binding spans Asp-539–Arg-641.

Belongs to the class-I aminoacyl-tRNA synthetase family. MetG type 2A subfamily. As to quaternary structure, homodimer. Zn(2+) is required as a cofactor.

It is found in the cytoplasm. It carries out the reaction tRNA(Met) + L-methionine + ATP = L-methionyl-tRNA(Met) + AMP + diphosphate. Its function is as follows. Is required not only for elongation of protein synthesis but also for the initiation of all mRNA translation through initiator tRNA(fMet) aminoacylation. The protein is Methionine--tRNA ligase of Clostridium tetani (strain Massachusetts / E88).